A 314-amino-acid polypeptide reads, in one-letter code: tRNA dimethylallyltransferase (314 aa).

Residue 40–47 coordinates ATP; the sequence is GPTASGKS. 42–47 contributes to the substrate binding site; that stretch reads TASGKS.

The protein belongs to the IPP transferase family. Monomer. Requires Mg(2+) as cofactor.

The enzyme catalyses adenosine(37) in tRNA + dimethylallyl diphosphate = N(6)-dimethylallyladenosine(37) in tRNA + diphosphate. Functionally, catalyzes the transfer of a dimethylallyl group onto the adenine at position 37 in tRNAs that read codons beginning with uridine, leading to the formation of N6-(dimethylallyl)adenosine (i(6)A). The protein is tRNA dimethylallyltransferase of Cereibacter sphaeroides (strain KD131 / KCTC 12085) (Rhodobacter sphaeroides).